The chain runs to 423 residues: Protein CLP1 homolog (423 aa).

Residues Glu16, Lys57, and 119 to 124 contribute to the ATP site; that span reads DVGKST.

It belongs to the Clp1 family. Clp1 subfamily.

Its subcellular location is the nucleus. Functionally, required for endonucleolytic cleavage during polyadenylation-dependent pre-mRNA 3'-end formation. The chain is Protein CLP1 homolog (cbc) from Drosophila sechellia (Fruit fly).